The following is a 206-amino-acid chain: Methyl-coenzyme M reductase operon protein C (206 aa).

In terms of assembly, MCR is composed of three subunits: alpha, beta, and gamma. The function of proteins C and D is not known.

In Methanosarcina barkeri (strain Fusaro / DSM 804), this protein is Methyl-coenzyme M reductase operon protein C (mcrC).